The sequence spans 347 residues: Actin-like protein MamK (347 aa).

Residues K9, T20–S21, and D76 each bind ATP. E143 contributes to the Mg(2+) binding site. Residues A164–T166, K218–S222, and G289 each bind ATP.

Belongs to the FtsA/MreB family. MamK subfamily. As to quaternary structure, forms cytoplasmic filaments. Filaments are parallel (polar) and double-helical. MamK subunits from each of the two strands are juxtaposed, each monomer binds ADP. At cell poles and septa interacts with methyl-accepting chemotaxis protein Amb0944 (MCP10). Forms filaments with MamK-like protein.

It is found in the cytoplasm. Its subcellular location is the cytoskeleton. The protein resides in the magnetosome membrane. It catalyses the reaction ATP + H2O = ADP + phosphate + H(+). Filament turnover is promoted by MamJ and/or LimJ which have overlapping function; at least one other protein is required for turnover. MamK filament dynamics are probably required for the assembly or maintenance of the magnetosome chain. Its function is as follows. Protein with ATPase activity which forms dynamic cytoplasmic filaments (probably with paralog MamK-like) that organize magnetosomes into long chains running parallel to the long axis of the cell. Turnover of MamK filaments is probably promoted by MamK-like, which provides a monomer pool. Forms twisted filaments in the presence of ATP or GTP. Serves to close gaps between magnetosomes in the chain. Interaction with MCP10 is involved in controlling the response to magnetic fields, possibly by controlling flagellar rotation. Expression in E.coli yields a filament in the cell's longitudinal axis; the protein nucleates at several sites and one extremity of the filament is located at the cell pole. This chain is Actin-like protein MamK (mamK), found in Paramagnetospirillum magneticum (strain ATCC 700264 / AMB-1) (Magnetospirillum magneticum).